We begin with the raw amino-acid sequence, 740 residues long: Anaphase-promoting complex subunit 5 (740 aa).

A Phosphoserine modification is found at S180. 13 TPR repeats span residues 194 to 234 (QKQA…FNPD), 235 to 285 (FAEA…GRSL), 286 to 322 (RYAA…SNDH), 323 to 363 (VCLQ…YLAS), 364 to 403 (LGIQ…SELI), 404 to 451 (DISI…TESF), 452 to 485 (AVAL…FPPN), 486 to 525 (SQHA…ALNG), 526 to 565 (IEGV…TEMV), 566 to 605 (ISVL…QYLA), 606 to 645 (SETV…VLDK), 646 to 681 (GRAM…NLSE), and 682 to 721 (AKNY…CAMI). Position 217 is a phosphothreonine (T217).

The protein belongs to the APC5 family. The mammalian APC/C is composed at least of 14 distinct subunits ANAPC1, ANAPC2, CDC27/APC3, ANAPC4, ANAPC5, CDC16/APC6, ANAPC7, CDC23/APC8, ANAPC10, ANAPC11, CDC26/APC12, ANAPC13, ANAPC15 and ANAPC16 that assemble into a complex of at least 19 chains with a combined molecular mass of around 1.2 MDa; APC/C interacts with FZR1 and FBXO5.

Its subcellular location is the nucleus. It is found in the cytoplasm. It localises to the cytoskeleton. The protein resides in the spindle. Its pathway is protein modification; protein ubiquitination. In terms of biological role, component of the anaphase promoting complex/cyclosome (APC/C), a cell cycle-regulated E3 ubiquitin ligase that controls progression through mitosis and the G1 phase of the cell cycle. The APC/C complex acts by mediating ubiquitination and subsequent degradation of target proteins: it mainly mediates the formation of 'Lys-11'-linked polyubiquitin chains and, to a lower extent, the formation of 'Lys-48'- and 'Lys-63'-linked polyubiquitin chains. The APC/C complex catalyzes assembly of branched 'Lys-11'-/'Lys-48'-linked branched ubiquitin chains on target proteins. This is Anaphase-promoting complex subunit 5 (Anapc5) from Mus musculus (Mouse).